Consider the following 530-residue polypeptide: Arginine--tRNA ligase (530 aa).

A 'HIGH' region motif is present at residues 113-123 (ANPTGPLHIGH).

Belongs to the class-I aminoacyl-tRNA synthetase family. In terms of assembly, monomer.

The protein resides in the cytoplasm. It carries out the reaction tRNA(Arg) + L-arginine + ATP = L-arginyl-tRNA(Arg) + AMP + diphosphate. The polypeptide is Arginine--tRNA ligase (Campylobacter jejuni subsp. jejuni serotype O:6 (strain 81116 / NCTC 11828)).